The following is an 873-amino-acid chain: Potassium voltage-gated channel subfamily KQT member 3 (873 aa).

Residues 1–41 are disordered; the sequence is MGLKARRAAGAAGGGGGEGGGGGGGAANPAGGDSAVAGDEE. Residues 1–121 are Cytoplasmic-facing; the sequence is MGLKARRAAG…IYDALERPRG (121 aa). Positions 11–26 are enriched in gly residues; the sequence is AAGGGGGEGGGGGGGA. T82 is subject to Phosphothreonine. Residues 122-144 form a helical membrane-spanning segment; sequence WALLYHALVFLIVLGCLILAVLT. Residues 145 to 154 lie on the Extracellular side of the membrane; that stretch reads TFKEYETVSG. A helical transmembrane segment spans residues 155–176; it reads DWLLLLETFAIFIFGAEFALRI. At 177–194 the chain is on the cytoplasmic side; that stretch reads WAAGCCCRYKGWRGRLKF. The chain crosses the membrane as a helical span at residues 195–214; that stretch reads ARKPLCMLDIFVLIASVPVV. Topologically, residues 215–226 are extracellular; that stretch reads AVGNQGNVLATS. Residues 227–245 form a helical; Voltage-sensor membrane-spanning segment; sequence LRSLRFLQILRMLRMDRRG. A 1,2-diacyl-sn-glycero-3-phospho-(1D-myo-inositol-4,5-bisphosphate) is bound at residue R244. Residues 246–257 are Cytoplasmic-facing; the sequence is GTWKLLGSAICA. Residues 258 to 283 form a helical membrane-spanning segment; it reads HSKELITAWYIGFLTLILSSFLVYLV. K260 is a binding site for a 1,2-diacyl-sn-glycero-3-phospho-(1D-myo-inositol-4,5-bisphosphate). Residues 284–303 are Extracellular-facing; it reads EKDVPEMDAQGEEMKEEFET. Positions 304 to 316 form an intramembrane region, pore-forming; that stretch reads YADALWWGLITLA. The Selectivity filter motif lies at 317 to 322; sequence TIGYGD. Topologically, residues 317–327 are extracellular; it reads TIGYGDKTPKT. Residues 328-354 form a helical membrane-spanning segment; the sequence is WEGRLIAATFSLIGVSFFALPAGILGS. Residues 355-873 are Cytoplasmic-facing; sequence GLALKVQEQH…SIWTPSNKPT (519 aa). The tract at residues 357–538 is mediates interaction with calmodulin; the sequence is ALKVQEQHRQ…RLYKKKFKET (182 aa). K367 contacts a 1,2-diacyl-sn-glycero-3-phospho-(1D-myo-inositol-4,5-bisphosphate). Disordered stretches follow at residues 575-603, 723-742, and 766-873; these read PGPP…PRNE, RGGP…GSTY, and ELQG…NKPT. Composition is skewed to polar residues over residues 588–601, 725–741, and 844–873; these read KGSA…QSPR, GPSS…SGST, and DPFT…NKPT.

This sequence belongs to the potassium channel family. KQT (TC 1.A.1.15) subfamily. Kv7.3/KCNQ3 sub-subfamily. Heterotetramer with KCNQ2; forms heterotetrameric native M-channel responsible for the M-current. Interacts with calmodulin; the interaction is calcium-independent, constitutive and participates in the proper assembly of a functional M-channel. Heteromultimer with KCNQ5. May associate with KCNE2. Interacts with IQCJ-SCHIP1. Interacts (via the pore module) with SLC5A3/SMIT1; forms a coregulatory complex that alters ion selectivity, voltage dependence and gating kinetics of the channel. In terms of processing, KCNQ2/KCNQ3 are ubiquitinated by NEDD4L. Ubiquitination leads to protein degradation. Degradation induced by NEDD4L is inhibited by USP36. In terms of tissue distribution, expressed in dorsal root ganglion (DRG) neurons.

It is found in the cell membrane. The catalysed reaction is K(+)(in) = K(+)(out). It catalyses the reaction Rb(+)(in) = Rb(+)(out). The enzyme catalyses Cs(+)(in) = Cs(+)(out). It carries out the reaction Na(+)(in) = Na(+)(out). With respect to regulation, phosphatidylinositol-4,5-bisphosphate (PIP2) potentiates the activation of KCNQ channels by enhancing the electro-mechanical coupling of the voltage-sensing domain (VSD) and the pore-forming domain (PD). In the closed state of the channel, PIP2 is anchored at the S2-S3 loop; upon channel activation, PIP2 interacts with the S4-S5 linker and is involved in channel gating. Calcium suppresses KCNQ2-KCNQ3 channel currents, with calcium-bound calmodulin inducing a change in channel configuration which leads to the reduction of channel affinity for PIP2 and subsequent current suppression. Pore-forming subunit of the voltage-gated potassium (Kv) M-channel which is responsible for the M-current, a key controller of neuronal excitability. M-channel is composed of pore-forming subunits KCNQ2 and KCNQ3 assembled as heterotetramers. The native M-current has a slowly activating and deactivating potassium conductance which plays a critical role in determining the subthreshold electrical excitability of neurons as well as the responsiveness to synaptic inputs. M-channel is selectively permeable in vitro to other cations besides potassium, in decreasing order of affinity K(+) &gt; Rb(+) &gt; Cs(+) &gt; Na(+). M-channel association with SLC5A3/SMIT1 alters channel ion selectivity, increasing Na(+) and Cs(+) permeation relative to K(+). Suppressed by activation of M1 muscarinic acetylcholine receptors. KCNQ3 also associates with KCNQ5 to form a functional channel in vitro and may also contribute to the M-current in brain. The chain is Potassium voltage-gated channel subfamily KQT member 3 from Mus musculus (Mouse).